Consider the following 563-residue polypeptide: Probable CoA ligase CCL11 (563 aa).

ATP is bound by residues 195–203 (TSGTTSSPK), 328–333 (HGYGMT), D426, 438–441 (IKDR), and K534. The tract at residues 263–328 (DGEIIFNLIR…TESLGFVISH (66 aa)) is SBD1. Residues 329–405 (GYGMTEMLGV…LKGSSIMLGY (77 aa)) form an SBD2 region.

Belongs to the ATP-dependent AMP-binding enzyme family.

It localises to the cytoplasm. The protein resides in the cytosol. The protein is Probable CoA ligase CCL11 of Humulus lupulus (European hop).